We begin with the raw amino-acid sequence, 247 residues long: Segregation and condensation protein A (247 aa).

The protein belongs to the ScpA family. Component of a cohesin-like complex composed of ScpA, ScpB and the Smc homodimer, in which ScpA and ScpB bind to the head domain of Smc. The presence of the three proteins is required for the association of the complex with DNA.

It localises to the cytoplasm. Its function is as follows. Participates in chromosomal partition during cell division. May act via the formation of a condensin-like complex containing Smc and ScpB that pull DNA away from mid-cell into both cell halves. This Bacillus cereus (strain G9842) protein is Segregation and condensation protein A.